The primary structure comprises 347 residues: Phosphoribosylformylglycinamidine cyclo-ligase (347 aa).

Belongs to the AIR synthase family.

It is found in the cytoplasm. It catalyses the reaction 2-formamido-N(1)-(5-O-phospho-beta-D-ribosyl)acetamidine + ATP = 5-amino-1-(5-phospho-beta-D-ribosyl)imidazole + ADP + phosphate + H(+). It functions in the pathway purine metabolism; IMP biosynthesis via de novo pathway; 5-amino-1-(5-phospho-D-ribosyl)imidazole from N(2)-formyl-N(1)-(5-phospho-D-ribosyl)glycinamide: step 2/2. The chain is Phosphoribosylformylglycinamidine cyclo-ligase from Alcanivorax borkumensis (strain ATCC 700651 / DSM 11573 / NCIMB 13689 / SK2).